A 67-amino-acid chain; its full sequence is Small ribosomal subunit protein bS21 (67 aa).

The protein belongs to the bacterial ribosomal protein bS21 family.

The polypeptide is Small ribosomal subunit protein bS21 (Hydrogenobaculum sp. (strain Y04AAS1)).